A 354-amino-acid polypeptide reads, in one-letter code: Vascular endothelial growth factor D (354 aa).

Positions 1-21 (MYREWVVVNVFMMLYVQLVQG) are cleaved as a signal peptide. A propeptide spans 22 to 88 (SSNEHGPVKR…SRSASHRSTR (67 aa)) (or 99 (in a minor form)). 3 disulfides stabilise this stretch: Cys111–Cys153, Cys142–Cys189, and Cys146–Cys191. Residues Asn155 and Asn185 are each glycosylated (N-linked (GlcNAc...) asparagine). Residues 206–354 (SIQIPEEDRC…AQGPHSRKNP (149 aa)) constitute a propeptide that is removed on maturation. The 1; approximate repeat unit spans residues 222-237 (CPIDMLWDSNKCKCVL). A 4 X 16 AA repeats of C-X(10)-C-X-C-X(1,3)-C region spans residues 222–318 (CPIDMLWDSN…PDTCSCEDRC (97 aa)). 3 tandem repeats follow at residues 258 to 273 (CGPHMMFDEDRCECVC), 277 to 293 (CPKDLIQHPKNCSCFEC), and 301 to 318 (CQKHKLFHPDTCSCEDRC). The N-linked (GlcNAc...) asparagine glycan is linked to Asn287.

The protein belongs to the PDGF/VEGF growth factor family. Homodimer; non-covalent and antiparallel. Undergoes a complex proteolytic maturation which generates a variety of processed secreted forms with increased activity toward VEGFR-3 and VEGFR-2. VEGF-D first form an antiparallel homodimer linked by disulfide bonds before secretion. The fully processed VEGF-D is composed mostly of two VEGF homology domains (VHDs) bound by non-covalent interactions. As to expression, highly expressed in lung, heart, small intestine and fetal lung, and at lower levels in skeletal muscle, colon, and pancreas.

The protein localises to the secreted. Its function is as follows. Growth factor active in angiogenesis, lymphangiogenesis and endothelial cell growth, stimulating their proliferation and migration and also has effects on the permeability of blood vessels. May function in the formation of the venous and lymphatic vascular systems during embryogenesis, and also in the maintenance of differentiated lymphatic endothelium in adults. Binds and activates VEGFR-2 (KDR/FLK1) and VEGFR-3 (FLT4) receptors. The protein is Vascular endothelial growth factor D of Homo sapiens (Human).